Consider the following 445-residue polypeptide: Phosphoglucosamine mutase 1 (445 aa).

Catalysis depends on serine 102, which acts as the Phosphoserine intermediate. Mg(2+) is bound by residues serine 102, aspartate 241, aspartate 243, and aspartate 245. A Phosphoserine modification is found at serine 102.

The protein belongs to the phosphohexose mutase family. Mg(2+) is required as a cofactor. Activated by phosphorylation.

The catalysed reaction is alpha-D-glucosamine 1-phosphate = D-glucosamine 6-phosphate. Its function is as follows. Catalyzes the conversion of glucosamine-6-phosphate to glucosamine-1-phosphate. In Shewanella sp. (strain MR-4), this protein is Phosphoglucosamine mutase 1.